The primary structure comprises 30 residues: Cytochrome c oxidase subunit 5C (30 aa).

The chain crosses the membrane as a helical span at residues 15 to 30; it reads VVKELVIXXXLGLXAG.

This sequence belongs to the cytochrome c oxidase subunit 5C family.

The protein localises to the mitochondrion inner membrane. This protein is one of the nuclear-coded polypeptide chains of cytochrome c oxidase, the terminal oxidase in mitochondrial electron transport. The chain is Cytochrome c oxidase subunit 5C (COX5C) from Solanum tuberosum (Potato).